The chain runs to 2696 residues: Protein ILITYHIA (2696 aa).

A compositionally biased stretch (polar residues) spans 1 to 18; that stretch reads MSYSMVNASSAVSSPETA. Residues 1–26 form a disordered region; it reads MSYSMVNASSAVSSPETAKNSDEPPP. HEAT repeat units lie at residues 162–204, 253–290, 303–340, 364–400, 401–438, 487–525, 526–562, 564–601, and 642–677; these read DIAP…MKTF, STQA…IYSL, KDSP…DVLN, EFQT…IDLS, KYAL…KSSN, SLSR…RSSV, AIQP…NPDT, SQIS…SKIA, and VVCV…FLLC. Residues 901-941 are disordered; it reads KQEPSSNHSLKKGLASRETANSGRRDTAKLTKKADKGKTAK. Residues 923–941 are compositionally biased toward basic and acidic residues; the sequence is GRRDTAKLTKKADKGKTAK. HEAT repeat units lie at residues 985 to 1021, 1082 to 1118, 1188 to 1225, 1273 to 1311, 1315 to 1355, 1358 to 1395, 1397 to 1433, 1436 to 1474, 1478 to 1515, 1516 to 1553, 1564 to 1600, 1601 to 1638, 1640 to 1677, 1683 to 1720, 1722 to 1759, 1761 to 1797, 1801 to 1838, and 1840 to 1876; these read HSQL…CTVQ, DTFT…GLQA, HDLG…ESPS, KDLP…KHGK, SLLF…HLAR, PKVH…SKQE, APAL…GFGI, LKKY…KLGK, PYVI…QLSA, YGVK…CAPQ, PKLT…VIKN, PEIS…NSVD, PSLA…LVTE, PYIG…GMGE, NFPD…ALGT, YFEN…SLGA, KYLQ…HHAT, and SLPL…KVAG. Ser1887 is subject to Phosphoserine. HEAT repeat units follow at residues 1908–1945, 1949–1986, 1988–2024, 2029–2066, 2067–2102, 2104–2137, 2138–2175, 2177–2213, 2217–2254, 2258–2292, 2293–2330, 2335–2373, 2377–2414, 2416–2450, 2455–2492, 2494–2530, 2536–2573, 2580–2617, and 2620–2658; these read DKRN…NTPK, EIMP…KLGE, VLPL…SAGR, SFMD…SAGL, QAMD…VRTA, VLPH…AGFN, THLG…VIDE, GVET…SSKL, DEAP…SVPK, PSYI…LCLP, KSLK…VTSE, EFVI…RGGM, PFLP…LSTR, DPLV…HAGK, AVRV…YLEA, QLSV…HNPS, SLFS…KQLA, KVVI…DNPS, and MANI…LTKG.

The protein belongs to the GCN1 family.

In terms of biological role, involved in immunity against bacterial infection and in non-host resistance. Required for embryo development. Required for systemic acquired resistance, but functions in an salicylic acid-independent manner. Required for bacterium-triggered stomatal closure response. In Arabidopsis thaliana (Mouse-ear cress), this protein is Protein ILITYHIA.